We begin with the raw amino-acid sequence, 116 residues long: Large ribosomal subunit protein bL19 (116 aa).

This sequence belongs to the bacterial ribosomal protein bL19 family.

Its function is as follows. This protein is located at the 30S-50S ribosomal subunit interface and may play a role in the structure and function of the aminoacyl-tRNA binding site. The sequence is that of Large ribosomal subunit protein bL19 from Pseudothermotoga lettingae (strain ATCC BAA-301 / DSM 14385 / NBRC 107922 / TMO) (Thermotoga lettingae).